A 313-amino-acid chain; its full sequence is tRNA pseudouridine synthase B (313 aa).

Catalysis depends on Asp48, which acts as the Nucleophile.

The protein belongs to the pseudouridine synthase TruB family. Type 1 subfamily.

The catalysed reaction is uridine(55) in tRNA = pseudouridine(55) in tRNA. Its function is as follows. Responsible for synthesis of pseudouridine from uracil-55 in the psi GC loop of transfer RNAs. The chain is tRNA pseudouridine synthase B from Saccharophagus degradans (strain 2-40 / ATCC 43961 / DSM 17024).